A 647-amino-acid chain; its full sequence is C2H2 finger domain transcription factor USV101 (647 aa).

Basic and acidic residues predominate over residues M1–A10. The interval M1–P132 is disordered. 2 stretches are compositionally biased toward polar residues: residues E27 to Q54 and S66 to Y84. Low complexity predominate over residues P97–S122. C2H2-type zinc fingers lie at residues F144 to H169 and F175 to H197. The disordered stretch occupies residues Q220 to Q647. The span at A222–K248 shows a compositional bias: basic and acidic residues. The segment covering A249–A259 has biased composition (low complexity). Residues G261–N278 are compositionally biased toward polar residues. 3 stretches are compositionally biased toward low complexity: residues S312–A327, H404–A414, and G421–P434. The segment covering R504–K515 has biased composition (basic and acidic residues). Low complexity predominate over residues S521–H540. Over residues V628 to Q647 the composition is skewed to basic and acidic residues.

Its subcellular location is the nucleus. The protein resides in the cytoplasm. Functionally, transcription factor that promotes pheromone gene expression, which results in a subsequent increase in cell fusion. Also promotes production of melanin and capsule and thereby is required for full virulence. This Cryptococcus neoformans var. grubii serotype A (strain H99 / ATCC 208821 / CBS 10515 / FGSC 9487) (Filobasidiella neoformans var. grubii) protein is C2H2 finger domain transcription factor USV101.